Reading from the N-terminus, the 193-residue chain is Oligoribonuclease (193 aa).

An Exonuclease domain is found at 14 to 177; that stretch reads LIWIDLEMTG…SDIYDSIAEL (164 aa). Y135 is an active-site residue.

The protein belongs to the oligoribonuclease family.

Its subcellular location is the cytoplasm. Functionally, 3'-to-5' exoribonuclease specific for small oligoribonucleotides. This Xylella fastidiosa (strain Temecula1 / ATCC 700964) protein is Oligoribonuclease.